Here is a 404-residue protein sequence, read N- to C-terminus: Nicotinate phosphoribosyltransferase (404 aa).

A Phosphohistidine; by autocatalysis modification is found at H224.

It belongs to the NAPRTase family. Post-translationally, transiently phosphorylated on a His residue during the reaction cycle. Phosphorylation strongly increases the affinity for substrates and increases the rate of nicotinate D-ribonucleotide production. Dephosphorylation regenerates the low-affinity form of the enzyme, leading to product release.

The enzyme catalyses nicotinate + 5-phospho-alpha-D-ribose 1-diphosphate + ATP + H2O = nicotinate beta-D-ribonucleotide + ADP + phosphate + diphosphate. It functions in the pathway cofactor biosynthesis; NAD(+) biosynthesis; nicotinate D-ribonucleotide from nicotinate: step 1/1. Functionally, catalyzes the synthesis of beta-nicotinate D-ribonucleotide from nicotinate and 5-phospho-D-ribose 1-phosphate at the expense of ATP. In Photorhabdus laumondii subsp. laumondii (strain DSM 15139 / CIP 105565 / TT01) (Photorhabdus luminescens subsp. laumondii), this protein is Nicotinate phosphoribosyltransferase.